The chain runs to 786 residues: Kazrin-A (786 aa).

The interval 44–70 (EEPGEPQEHQQQQQQQNHQDAPVQRQK) is disordered. Residues 52–62 (HQQQQQQQNHQ) are compositionally biased toward low complexity. The stretch at 92–270 (LLHEEVLRLQ…SLATLTKDVP (179 aa)) forms a coiled coil. A disordered region spans residues 350-425 (MSDASVMEGE…LFDDSDSLSS (76 aa)). SAM domains lie at 457-522 (WRAG…YRDA), 535-599 (DHHW…LHTL), and 623-686 (WTCQ…SEEM). The tract at residues 703–760 (PLGTPPTLHRQSSLSSSSPSCHDDQQSLRRVKQQLGLSPKNLTARNISHQSRSGSFPR) is disordered. Residues 742–758 (KNLTARNISHQSRSGSF) are compositionally biased toward polar residues.

The protein belongs to the kazrin family.

In Danio rerio (Zebrafish), this protein is Kazrin-A (kazna).